Reading from the N-terminus, the 976-residue chain is Probable alanine--tRNA ligase, chloroplastic/mitochondrial (976 aa).

Residues 1 to 54 (MPRPGFAHATAPALAHARARISPVARRRVVVMRTRVDGAAKSLVTQLRLALGST) constitute a chloroplast and mitochondrion transit peptide. The disordered stretch occupies residues 71 to 95 (LGTATNDQSTGTRANPNAEGKDNSG). Polar residues predominate over residues 73 to 85 (TATNDQSTGTRAN).

It belongs to the class-II aminoacyl-tRNA synthetase family. Monomer. It depends on Zn(2+) as a cofactor.

Its subcellular location is the plastid. It is found in the chloroplast. The protein localises to the mitochondrion. It catalyses the reaction tRNA(Ala) + L-alanine + ATP = L-alanyl-tRNA(Ala) + AMP + diphosphate. Functionally, catalyzes the attachment of alanine to tRNA(Ala) in a two-step reaction: alanine is first activated by ATP to form Ala-AMP and then transferred to the acceptor end of tRNA(Ala). Also edits incorrectly charged tRNA(Ala) via its editing domain. The protein is Probable alanine--tRNA ligase, chloroplastic/mitochondrial of Ostreococcus tauri.